Consider the following 252-residue polypeptide: Metalloprotease LoiP (252 aa).

An N-terminal signal peptide occupies residues methionine 1–glycine 18. Residue cysteine 19 is the site of N-palmitoyl cysteine attachment. Cysteine 19 carries the S-diacylglycerol cysteine lipid modification. The cysteines at positions 53 and 108 are disulfide-linked. Histidine 130 is a Zn(2+) binding site. The active site involves glutamate 131. Zn(2+) is bound by residues histidine 134 and glutamate 189. Positions arginine 224–lysine 252 are disordered.

It belongs to the peptidase M48B family. In terms of assembly, interacts with Era and BepA. Requires Zn(2+) as cofactor. In terms of processing, the intramolecular disulfide bond improves the stability and the activity of LoiP. It forms even in the absence of the oxido-reductase DsbA.

The protein resides in the cell outer membrane. Functionally, metalloprotease that cleaves substrates preferentially between Phe-Phe residues. Plays a role in response to some stress conditions. Seems to regulate the expression of speB. The chain is Metalloprotease LoiP (loiP) from Escherichia coli (strain K12).